Here is a 147-residue protein sequence, read N- to C-terminus: Large ribosomal subunit protein uL13 (147 aa).

The protein belongs to the universal ribosomal protein uL13 family. In terms of assembly, part of the 50S ribosomal subunit.

This protein is one of the early assembly proteins of the 50S ribosomal subunit, although it is not seen to bind rRNA by itself. It is important during the early stages of 50S assembly. This chain is Large ribosomal subunit protein uL13, found in Beutenbergia cavernae (strain ATCC BAA-8 / DSM 12333 / CCUG 43141 / JCM 11478 / NBRC 16432 / NCIMB 13614 / HKI 0122).